The following is a 212-amino-acid chain: Proheparin-binding EGF-like growth factor (212 aa).

Positions 1–18 (MDGRVVLIHALLTAVCSA) are cleaved as a signal peptide. At 19–167 (AVGKFGRDGP…PSTYDHTTAL (149 aa)) the chain is on the extracellular side. The tract at residues 82-108 (SKPQGPVTPKKKGNGNKRRKGKGLGKK) is disordered. Residues 90-106 (PKKKGNGNKRRKGKGLG) are compositionally biased toward basic residues. One can recognise an EGF-like domain in the interval 108 to 148 (KRDPCLRKYKDFCIHGECKYIRELGAPSCICQPGYHGERCH). Disulfide bonds link Cys-112–Cys-125, Cys-120–Cys-136, and Cys-138–Cys-147. Positions 153-212 (PVEHPPSTYDHTTALAVVAVVLSSLCLVIITALLMFRCHKRGVYDVENEEKIKLGITVNH) are cleaved as a propeptide — C-terminal. A helical transmembrane segment spans residues 168 to 188 (AVVAVVLSSLCLVIITALLMF). The Cytoplasmic segment spans residues 189–212 (RCHKRGVYDVENEEKIKLGITVNH).

In terms of assembly, interacts with CNIH2.

It is found in the secreted. It localises to the extracellular space. The protein localises to the cell membrane. Functionally, may be involved in macrophage-mediated cellular proliferation. It is mitogenic for fibroblasts and smooth muscle but not endothelial cells. It is able to bind EGF receptor/EGFR with higher affinity than EGF itself and is a far more potent mitogen for smooth muscle cells than EGF. Plays an important role in the proper development of cranial nerves by inhibiting the migration of the cranial neural crest cells (NCCs) into the odd-numbered neuromeres (r3 and r5) of the hindbrain Plays a role in mediating v-Jun-induced oncogenic transformation. This Gallus gallus (Chicken) protein is Proheparin-binding EGF-like growth factor (HBEGF).